The sequence spans 253 residues: Sulfate transporter CysZ (253 aa).

A run of 4 helical transmembrane segments spans residues 31–51 (FVILPLLVNILLMGGAFWWLF), 75–95 (LLWPLAVISVLLVFGYFFSTI), 151–171 (IVLLILYFIPGIGQTVAPVLW), and 222–242 (IPLLNLFIMPVAVCGATAMWV).

The protein belongs to the CysZ family.

It localises to the cell inner membrane. In terms of biological role, high affinity, high specificity proton-dependent sulfate transporter, which mediates sulfate uptake. Provides the sulfur source for the cysteine synthesis pathway. The protein is Sulfate transporter CysZ of Shigella dysenteriae serotype 1 (strain Sd197).